Consider the following 569-residue polypeptide: BICD family-like cargo adapter 1 (569 aa).

A disordered region spans residues M1–G36. Positions A97–G101 match the CC1 box motif. A coiled-coil region spans residues K102–H283. A disordered region spans residues A385–P405. Residues N458–R520 adopt a coiled-coil conformation. Residues E533–R554 are disordered.

The protein belongs to the BICDR family. Part of a tripartite complex with dynein and dynactin, acts an adapter linking the dynein motor complex and dynactin. Highly expressed in developing neural tissues and developing eye.

The protein localises to the cytoplasm. It is found in the cytoskeleton. The protein resides in the microtubule organizing center. It localises to the centrosome. Functionally, acts as an adapter protein linking the dynein motor complex to various cargos and converts dynein from a non-processive to a highly processive motor in the presence of dynactin. Facilitates the interaction between dynein and dynactin and activates dynein processivity (the ability to move along a microtubule for a long distance without falling off the track). Predominantly recruits 2 dyneins, which increases both the force and speed of the microtubule motor. Component of secretory vesicle machinery in developing neurons that acts as a regulator of neurite outgrowth. Regulates the secretory vesicle transport by controlling the accumulation of Rab6-containing secretory vesicles in the pericentrosomal region restricting anterograde secretory transport during the early phase of neuronal differentiation, thereby inhibiting neuritogenesis. The sequence is that of BICD family-like cargo adapter 1 (bicdl1) from Danio rerio (Zebrafish).